The chain runs to 225 residues: Orotate phosphoribosyltransferase (225 aa).

K29 lines the 5-phospho-alpha-D-ribose 1-diphosphate pocket. An orotate-binding site is contributed by 37–38; that stretch reads FF. 5-phospho-alpha-D-ribose 1-diphosphate contacts are provided by residues 75–76, R101, K102, K105, H107, and 126–134; these read YK and DDVISAGTS. Residues S130 and R158 each contribute to the orotate site.

It belongs to the purine/pyrimidine phosphoribosyltransferase family. PyrE subfamily. In terms of assembly, homodimer. It depends on Mg(2+) as a cofactor.

It carries out the reaction orotidine 5'-phosphate + diphosphate = orotate + 5-phospho-alpha-D-ribose 1-diphosphate. The protein operates within pyrimidine metabolism; UMP biosynthesis via de novo pathway; UMP from orotate: step 1/2. Its function is as follows. Catalyzes the transfer of a ribosyl phosphate group from 5-phosphoribose 1-diphosphate to orotate, leading to the formation of orotidine monophosphate (OMP). This chain is Orotate phosphoribosyltransferase, found in Ralstonia pickettii (strain 12J).